A 331-amino-acid chain; its full sequence is Flagellar P-ring protein (331 aa).

An N-terminal signal peptide occupies residues 1–25 (MKKRLAVLLVIVLTITFSFSVTTRI).

The protein belongs to the FlgI family. In terms of assembly, the basal body constitutes a major portion of the flagellar organelle and consists of four rings (L,P,S, and M) mounted on a central rod.

It is found in the periplasm. It localises to the bacterial flagellum basal body. In terms of biological role, assembles around the rod to form the L-ring and probably protects the motor/basal body from shearing forces during rotation. The polypeptide is Flagellar P-ring protein (Thermotoga petrophila (strain ATCC BAA-488 / DSM 13995 / JCM 10881 / RKU-1)).